Here is a 280-residue protein sequence, read N- to C-terminus: Large ribosomal subunit protein uL2 (280 aa).

The interval 226-280 is disordered; sequence NPIDHPHGGGEGRTSGGRHPVTPWGKPTKGAKTRNKKKASSQLIIRSRHAKKKGR. Composition is skewed to basic residues over residues 254–264 and 271–280; these read KGAKTRNKKKA and RSRHAKKKGR.

The protein belongs to the universal ribosomal protein uL2 family. In terms of assembly, part of the 50S ribosomal subunit. Forms a bridge to the 30S subunit in the 70S ribosome.

Functionally, one of the primary rRNA binding proteins. Required for association of the 30S and 50S subunits to form the 70S ribosome, for tRNA binding and peptide bond formation. It has been suggested to have peptidyltransferase activity; this is somewhat controversial. Makes several contacts with the 16S rRNA in the 70S ribosome. This is Large ribosomal subunit protein uL2 from Roseobacter denitrificans (strain ATCC 33942 / OCh 114) (Erythrobacter sp. (strain OCh 114)).